The primary structure comprises 100 residues: Secreted protein of Ly-6 domain 1 (100 aa).

Positions Met-1–Ala-22 are cleaved as a signal peptide. The UPAR/Ly6 domain occupies Leu-23–Phe-100. 5 disulfide bridges follow: Cys-25/Cys-52, Cys-28/Cys-37, Cys-44/Cys-70, Cys-74/Cys-90, and Cys-91/Cys-97. N-linked (GlcNAc...) asparagine glycosylation is present at Asn-60.

Glycosylated. As to expression, expressed in placenta, where it is detected in both fetal tissues (cotyledon and intercotyledon) and maternal tissues (caruncle and intercaruncular endometrium) (at protein level). Expressed in the mesenchyme area of villi in the cotyledon (at protein level). In endometrium, expressed in the luminal epithelium and weakly in the subluminal stroma (at protein level). Detected in trophoblast mononucleate cells (TMCs) (at protein level). Also detected in trophoblast binucleate cells (BNCs). Overall, expression is strongest in fetal tissue and lower in maternal tissue. Not detected in other tissues tested.

It is found in the secreted. Its function is as follows. Binds specifically to type I collagen. This is Secreted protein of Ly-6 domain 1 from Bos taurus (Bovine).